The following is a 557-amino-acid chain: DNA replication factor Cdt1 (557 aa).

A PIP-box K+4 motif motif is present at residues methionine 1–isoleucine 25. The disordered stretch occupies residues proline 20–lysine 113. Phosphothreonine; by MAPK8 is present on threonine 28. Serine 30 is subject to Phosphoserine. The Cyclin-binding motif motif lies at arginine 65–leucine 67. Residues leucine 69–glutamate 81 show a composition bias toward low complexity. Over residues proline 82 to proline 106 the composition is skewed to pro residues. Serine 107 is modified (phosphoserine; by MAPK8). The segment at proline 163–tyrosine 203 is interaction with GMNN. The residue at position 392 (serine 392) is a Phosphoserine. The segment at arginine 397–leucine 427 is disordered. The span at serine 407–alanine 422 shows a compositional bias: pro residues. Positions leucine 463–leucine 557 are interaction with LRWD1.

This sequence belongs to the Cdt1 family. As to quaternary structure, interacts with GMNN; the interaction inhibits the binding of the MCM complex to origins of replication. Interacts with MCM6. Interacts with CDC6; are mutually dependent on one another for loading MCM complexes onto chromatin. Interacts with PCNA. Interacts with LRWD1 during G1 phase and during mitosis. Interacts with NDC80 subunit of the NDC80 complex; leading to kinetochore localization. Interacts with KAT7. Interacts with ubiquitin-binding protein FAF1; the interaction is likely to promote CDT1 degradation. In terms of processing, two independent E3 ubiquitin ligase complexes, SCF(SKP2) and the DCX(DTL) complex, mediated CDT1 degradation in S phase. Ubiquitinated by the DCX(DTL) complex, in response to DNA damage, leading to its degradation. Ubiquitination by the DCX(DTL) complex is necessary to ensure proper cell cycle regulation and is PCNA-dependent: interacts with PCNA via its PIP-box, while the presence of the containing the 'K+4' motif in the PIP box, recruit the DCX(DTL) complex, leading to its degradation. Phosphorylation at Thr-28 by CDK2 targets CDT1 for ubiquitynation by SCF(SKP2) E3 ubiquitin ligase and subsequent degradation. The interaction with GMNN protects it against ubiquitination. Deubiquitinated by USP37. Ubiquitinated and degraded by the SCF(FBXO31) complex during the G2 phase to prevent re-replication. Post-translationally, phosphorylation by cyclin A-dependent kinases at Thr-28 targets CDT1 for ubiquitynation by SCF(SKP2) E3 ubiquitin ligase and subsequent degradation. Phosphorylated at Thr-28 by MAPK8/JNK1, which blocks replication licensing in response to stress. Binding to GMNN is not affected by phosphorylation.

It localises to the nucleus. The protein resides in the chromosome. Its subcellular location is the centromere. The protein localises to the kinetochore. Functionally, required for both DNA replication and mitosis. DNA replication licensing factor, required for pre-replication complex assembly. Cooperates with CDC6 and the origin recognition complex (ORC) during G1 phase of the cell cycle to promote the loading of the mini-chromosome maintenance (MCM) complex onto DNA to generate pre-replication complexes (pre-RC). Required also for mitosis by promoting stable kinetochore-microtubule attachments. Potential oncogene. This Mus musculus (Mouse) protein is DNA replication factor Cdt1.